Here is a 259-residue protein sequence, read N- to C-terminus: Ras-related protein Rab-34 (259 aa).

Methionine 1 carries the N-acetylmethionine modification. Serine 62, valine 63, glycine 64, lysine 65, threonine 66, aspartate 78, tyrosine 81, and threonine 84 together coordinate GTP. Residue threonine 66 participates in Mg(2+) binding. A Switch 1 motif is present at residues 71–89 (RFCKDTFDKNYKATIGVDF). The Mg(2+) site is built by threonine 84 and aspartate 107. Positions 108–127 (TAGQERFKCIASTYYRGAQA) match the Switch 2 motif. Glycine 110, lysine 167, aspartate 169, and serine 198 together coordinate GTP. A phosphoserine mark is found at serine 241 and serine 244. 2 S-geranylgeranyl cysteine lipidation sites follow: cysteine 257 and cysteine 258.

It belongs to the small GTPase superfamily. Rab family. Interacts with RILP. The GTP-bound form interacts with REP15. Mg(2+) serves as cofactor.

It is found in the cytoplasm. It localises to the golgi apparatus. The protein resides in the cytoplasmic vesicle. Its subcellular location is the phagosome. The protein localises to the phagosome membrane. It is found in the cell projection. It localises to the cilium. The protein resides in the cytoskeleton. Its subcellular location is the microtubule organizing center. The protein localises to the centrosome. It is found in the centriole. The catalysed reaction is GTP + H2O = GDP + phosphate + H(+). Its activity is regulated as follows. Regulated by guanine nucleotide exchange factors (GEFs) which promote the exchange of bound GDP for free GTP. Regulated by GTPase activating proteins (GAPs) which increase the GTP hydrolysis activity. Inhibited by GDP dissociation inhibitors (GDIs). Functionally, the small GTPases Rab are key regulators of intracellular membrane trafficking, from the formation of transport vesicles to their fusion with membranes. Rabs cycle between an inactive GDP-bound form and an active GTP-bound form that is able to recruit to membranes different sets of downstream effectors directly responsible for vesicle formation, movement, tethering and fusion. RAB34 transports protein involved in the redistribution of lysosomes to the peri-Golgi region. Plays a role in the maturation of phagosomes that engulf pathogens, such as S.aureus and M.tuberculosis. Plays a role in the fusion of phagosomes with lysosomes. Required for the early steps of intracellular ciliogenesis, the cilium assembly pathway initiated by trafficking and docking of ciliary vesicles to the centrioles in the cytoplasm, followed by axoneme formation in the cytoplasm. After axoneme elongation, the centrioles migrate close to the cell surface so that ciliary vesicles can fuse with the plasma membrane to expose cilia to the extracellular space. It seems dispensable for ciliogenesis via the extracellular pathway where cilium assembly begins after migration and docking of the centriole to the plasma membrane. Also acts as a positive regulator of hedgehog signaling and regulates ciliary function. The sequence is that of Ras-related protein Rab-34 (RAB34) from Sus scrofa (Pig).